The following is a 266-amino-acid chain: GRIP and coiled-coil domain-containing protein C365.11 (266 aa).

The segment covering 1 to 13 (METTVSAKNSLEN) has biased composition (polar residues). The interval 1–88 (METTVSAKNS…LDEKVKELEN (88 aa)) is disordered. Serine 10 carries the phosphoserine modification. Basic residues predominate over residues 36–49 (ASKKKRKNRKKKKN). Residues 63-88 (EEQRSGSIDSKDKEKPLDEKVKELEN) show a composition bias toward basic and acidic residues. Positions 73 to 188 (KDKEKPLDEK…ESVKSHESEL (116 aa)) form a coiled coil. Serine 202 and serine 204 each carry phosphoserine. Residues 216–264 (ISKELINKEYARNVLLQFLENHEHRDKILPILSTALDLEEVHQHLILKN) form the GRIP domain.

The protein localises to the cytoplasm. The sequence is that of GRIP and coiled-coil domain-containing protein C365.11 from Schizosaccharomyces pombe (strain 972 / ATCC 24843) (Fission yeast).